Reading from the N-terminus, the 598-residue chain is Peroxisomal multifunctional enzyme type 2 (598 aa).

The (3R)-hydroxyacyl-CoA dehydrogenase stretch occupies residues 1 to 309; the sequence is MSSSDGKLRY…LEVLEKLKEG (309 aa). NAD(+)-binding positions include 16–40, Leu-24, Asp-43, 78–79, and Asn-102; these read VVTGAGAGLGREYALLFAERGAKVV and SV. Position 154 (Ser-154) interacts with substrate. Tyr-167 serves as the catalytic Proton acceptor. Residues 167 to 171 and 199 to 202 each bind NAD(+); these read YTAAK and AASR. Residues 310–598 are enoyl-CoA hydratase 2; the sequence is GGDAIEDAFE…VDLKSSQAKL (289 aa). (3R)-3-hydroxydecanoyl-CoA-binding positions include 390 to 391, Lys-419, 496 to 501, Gly-519, and Phe-549; these read HG and DKNPLH. The MaoC-like domain occupies 469–586; the sequence is PAPNRQPDAT…VETGKEVISG (118 aa). The Microbody targeting signal motif lies at 596 to 598; the sequence is AKL.

The protein belongs to the short-chain dehydrogenases/reductases (SDR) family. In terms of assembly, homodimer.

The protein resides in the peroxisome. It carries out the reaction a (3R)-3-hydroxyacyl-CoA + NAD(+) = a 3-oxoacyl-CoA + NADH + H(+). It catalyses the reaction a (3R)-3-hydroxyacyl-CoA = a (2E)-enoyl-CoA + H2O. It functions in the pathway lipid metabolism; fatty acid beta-oxidation. In terms of biological role, bifunctional enzyme acting on the peroxisomal beta-oxidation pathway for fatty acids. The sequence is that of Peroxisomal multifunctional enzyme type 2 from Drosophila melanogaster (Fruit fly).